Reading from the N-terminus, the 278-residue chain is tRNA(Phe) (4-demethylwyosine(37)-C(7)) aminocarboxypropyltransferase (278 aa).

S-adenosyl-L-methionine contacts are provided by residues serine 109, arginine 116, glutamate 155, and 183–184 (DN).

The protein belongs to the class I-like SAM-binding methyltransferase superfamily. TRM5/TYW2 family.

It localises to the cytoplasm. The enzyme catalyses 4-demethylwyosine(37) in tRNA(Phe) + S-adenosyl-L-methionine = 4-demethyl-7-[(3S)-3-amino-3-carboxypropyl]wyosine(37) in tRNA(Phe) + S-methyl-5'-thioadenosine + H(+). S-adenosyl-L-methionine-dependent transferase that acts as a component of the wyosine derivatives biosynthesis pathway. Catalyzes the transfer of the alpha-amino-alpha-carboxypropyl (acp) group from S-adenosyl-L-methionine to 4-demethylwyosine (imG-14), forming 7-aminocarboxypropyl-demethylwyosine (wybutosine-86) at position 37 of tRNA(Phe). This is tRNA(Phe) (4-demethylwyosine(37)-C(7)) aminocarboxypropyltransferase from Pyrococcus horikoshii (strain ATCC 700860 / DSM 12428 / JCM 9974 / NBRC 100139 / OT-3).